Consider the following 646-residue polypeptide: MPPDLPSLLLRLVVLLLLSQAEARSFVVDREHDRFLLDGVPFRYVSGSLHYFRVPPVLWADRLLKMQLSGLNAVQFYVPWNYHEPEPGIYNFNGSRDLIAFLNEAAKVNLLVILRPGPYICAEWEMGGLPSWLLRNPNIHLRTSDPAFLEAVDSWFKVLLPKIYPFLYHNGGNIISIQVENEYGSYKACDFKYMRHLAGLFRALLGDKILLFTTDGPHGLRCGSLQGLYTTIDFGPADNVTRIFSLLREYEPHGPLVNSEYYTGWLDYWGQNHSTRSSPAVAQGLEKMLKLGASVNMYMFHGGTNFGYWNGADEKGRFLPITTSYDYDAPISEAGDPTPKLFAIRNVISKFQEIPLGPLPPPSPKMKFGPLTMSLDGNLLSFLDFLCPQGPIHSVLPLTFEAVKLDHGFMLYRTYLTSPVLEPTPFWVPNNGIHDRAYVMVDGVLKGVLERSLKQELYLTGTVGTRLDILLENMGRLSFGSNHSDFKGLLEAPLLGQTILTEWMMFPLKVDKLVKWWFPLQLMKRALPQASSVPAFYSAKFPVFGLLGDTFLYLPGWTKGQVWINGFNLGRYWTMRGPQQTLYVPRLLLFGRSINKITLLELENVPHNPQVQFLDKPILNSTLHWGYNFLLSETQGSFEPMELSGH.

The first 23 residues, Met1–Ala23, serve as a signal peptide directing secretion. A glycan (N-linked (GlcNAc...) asparagine) is linked at Asn93. The active-site Proton donor is Glu182. Residue Asn239 is glycosylated (N-linked (GlcNAc...) asparagine). The Nucleophile role is filled by Glu260.

It belongs to the glycosyl hydrolase 35 family.

Its subcellular location is the secreted. Functionally, probable glycosyl hydrolase. The protein is Beta-galactosidase-1-like protein (Glb1l) of Mus musculus (Mouse).